The chain runs to 2293 residues: Protein Ycf2 A (2293 aa).

1647–1654 is a binding site for ATP; sequence GSIGTGRS.

This sequence belongs to the Ycf2 family.

The protein localises to the plastid. The protein resides in the chloroplast stroma. Functionally, probable ATPase of unknown function. Its presence in a non-photosynthetic plant (Epifagus virginiana) and experiments in tobacco indicate that it has an essential function which is probably not related to photosynthesis. This Crucihimalaya wallichii (Rock-cress) protein is Protein Ycf2 A.